The following is a 124-amino-acid chain: Large ribosomal subunit protein uL18 (124 aa).

This sequence belongs to the universal ribosomal protein uL18 family. As to quaternary structure, part of the 50S ribosomal subunit; part of the 5S rRNA/L5/L18/L25 subcomplex. Contacts the 5S and 23S rRNAs.

In terms of biological role, this is one of the proteins that bind and probably mediate the attachment of the 5S RNA into the large ribosomal subunit, where it forms part of the central protuberance. This Desulfosudis oleivorans (strain DSM 6200 / JCM 39069 / Hxd3) (Desulfococcus oleovorans) protein is Large ribosomal subunit protein uL18.